The sequence spans 353 residues: Putative transcription factor MTF1 (353 aa).

Composition is skewed to polar residues over residues 11–26 (VTRSNQQTAANTTSPA) and 36–58 (EPSNVSDLTSEPVESTQIKQQGN). Disordered stretches follow at residues 11–96 (VTRS…ALPC) and 129–174 (FTTT…TTNP). 2 stretches are compositionally biased toward low complexity: residues 59–95 (TEASQDIQQEQQQQQTHIHPQQPALSAQQTQQQPALP) and 133–145 (NSSPNPSSPSPSS). The segment covering 148 to 164 (SHTRKNSKYTVRHHRTR) has biased composition (basic residues). Residues 165 to 174 (QSSFNGTTNP) are compositionally biased toward polar residues.

It localises to the nucleus. May be involved in transcriptional activation. This Mucor circinelloides f. lusitanicus (Mucor racemosus var. lusitanicus) protein is Putative transcription factor MTF1 (MTF1).